Consider the following 178-residue polypeptide: Bifunctional protein PyrR (178 aa).

Positions 99 to 111 (VIIVDDVLYTCRT) match the PRPP-binding motif.

It belongs to the purine/pyrimidine phosphoribosyltransferase family. PyrR subfamily. Homodimer and homohexamer; in equilibrium.

The enzyme catalyses UMP + diphosphate = 5-phospho-alpha-D-ribose 1-diphosphate + uracil. In terms of biological role, regulates transcriptional attenuation of the pyrimidine nucleotide (pyr) operon by binding in a uridine-dependent manner to specific sites on pyr mRNA. This disrupts an antiterminator hairpin in the RNA and favors formation of a downstream transcription terminator, leading to a reduced expression of downstream genes. Functionally, also displays a weak uracil phosphoribosyltransferase activity which is not physiologically significant. The protein is Bifunctional protein PyrR of Clostridium perfringens (strain ATCC 13124 / DSM 756 / JCM 1290 / NCIMB 6125 / NCTC 8237 / Type A).